A 201-amino-acid polypeptide reads, in one-letter code: Large ribosomal subunit protein uL4 (201 aa).

The tract at residues A45–R67 is disordered.

It belongs to the universal ribosomal protein uL4 family. As to quaternary structure, part of the 50S ribosomal subunit.

Functionally, one of the primary rRNA binding proteins, this protein initially binds near the 5'-end of the 23S rRNA. It is important during the early stages of 50S assembly. It makes multiple contacts with different domains of the 23S rRNA in the assembled 50S subunit and ribosome. Its function is as follows. Forms part of the polypeptide exit tunnel. This chain is Large ribosomal subunit protein uL4, found in Yersinia enterocolitica serotype O:8 / biotype 1B (strain NCTC 13174 / 8081).